The chain runs to 71 residues: Disintegrin halysin (71 aa).

Positions 1 to 71 (EAGEECDCGS…ISAGCPRNPF (71 aa)) constitute a Disintegrin domain. Disulfide bonds link cysteine 6–cysteine 21, cysteine 8–cysteine 16, cysteine 15–cysteine 38, cysteine 29–cysteine 35, cysteine 34–cysteine 59, and cysteine 47–cysteine 66. The Cell attachment site motif lies at 51-53 (RGD).

This sequence belongs to the venom metalloproteinase (M12B) family. P-II subfamily. P-IIa sub-subfamily. As to quaternary structure, monomer. In terms of tissue distribution, expressed by the venom gland.

It is found in the secreted. Functionally, inhibits fibrinogen interaction with platelets. Acts by binding to alpha-IIb/beta-3 (ITGA2B/ITGB3) on the platelet surface and inhibits aggregation induced by ADP, thrombin, platelet-activating factor and collagen. The sequence is that of Disintegrin halysin from Gloydius blomhoffii (Mamushi).